Here is a 217-residue protein sequence, read N- to C-terminus: Neuron-specific vesicular protein calcyon (217 aa).

Residues 1–25 form a disordered region; the sequence is MVKLGCSFSGKPGKDPGDQDGAAMD. Residues 1–87 lie on the Extracellular side of the membrane; the sequence is MVKLGCSFSG…EEGRRLPTAR (87 aa). Asparagine 73 carries N-linked (GlcNAc...) asparagine glycosylation. A helical membrane pass occupies residues 88-108; that stretch reads MIAFAMALLGCVLIMYKAIWY. Residues 109–217 lie on the Cytoplasmic side of the membrane; sequence DQFTCPDGFL…AGSAAPPPAQ (109 aa). The segment at 162 to 217 is disordered; the sequence is PAAWGDGYRAAKEERKGPTQAGAAAAATEPPGKPSAKAEKEAARKAAGSAAPPPAQ.

It belongs to the NSG family. As to quaternary structure, interacts with CLTA. Post-translationally, glycosylated. As to expression, expressed in the pyramidal cells of the prefrontal cortex, in hypothalamus and in caudate nucleus. No expression in spleen. Up-regulated in the prefrontal cortex of schizophrenic patients with nearly twice the levels of non-schizophrenics.

It localises to the cytoplasmic vesicle membrane. It is found in the cell membrane. In terms of biological role, interacts with clathrin light chain A and stimulates clathrin self-assembly and clathrin-mediated endocytosis. The polypeptide is Neuron-specific vesicular protein calcyon (CALY) (Homo sapiens (Human)).